The following is an 803-amino-acid chain: Sensor histidine kinase CheAY (803 aa).

At H47 the chain carries Phosphohistidine. Disordered stretches follow at residues 134-185 (LESA…DEPD) and 209-255 (EADK…ENKA). Basic and acidic residues-rich tracts occupy residues 136–166 (SAKE…ENKA), 209–226 (EADK…KPKQ), and 233–254 (ETPK…EENK). Residues 270–517 (RLDHLMNLIG…TQKLKIPLTL (248 aa)) form the Histidine kinase domain. H273 carries the post-translational modification Phosphohistidine; by autocatalysis. In terms of domain architecture, CheW-like spans 519-653 (IIQALLVGVQ…VGAMMDMAKS (135 aa)). Positions 678–796 (IVLAIDDSST…YLTTVVKRSI (119 aa)) constitute a Response regulatory domain. 4-aspartylphosphate is present on D729.

Post-translationally, autophosphorylated.

It catalyses the reaction ATP + protein L-histidine = ADP + protein N-phospho-L-histidine.. Functionally, member of the two-component regulatory system CheAY/CheY that regulates chemotaxis and colonization of the gastric mucosa. Functions as a sensor protein kinase which is autophosphorylated at a histidine residue and transfers its phosphate group to the conserved aspartic acid residue in the regulatory domain of CheY. In turn, phosphorylated CheY (CheY-P) interacts with the flagellar motor protein FliM to cause clockwise flagellar rotation and bacterial reversals, as opposed to straight swimming when CheY is not phosphorylated. The chain is Sensor histidine kinase CheAY (cheAY) from Helicobacter pylori (strain ATCC 700392 / 26695) (Campylobacter pylori).